Reading from the N-terminus, the 391-residue chain is NADH-quinone oxidoreductase subunit D (391 aa).

The protein belongs to the complex I 49 kDa subunit family. In terms of assembly, NDH-1 is composed of 14 different subunits. Subunits NuoB, C, D, E, F, and G constitute the peripheral sector of the complex.

It localises to the cell inner membrane. The enzyme catalyses a quinone + NADH + 5 H(+)(in) = a quinol + NAD(+) + 4 H(+)(out). In terms of biological role, NDH-1 shuttles electrons from NADH, via FMN and iron-sulfur (Fe-S) centers, to quinones in the respiratory chain. The immediate electron acceptor for the enzyme in this species is believed to be ubiquinone. Couples the redox reaction to proton translocation (for every two electrons transferred, four hydrogen ions are translocated across the cytoplasmic membrane), and thus conserves the redox energy in a proton gradient. The protein is NADH-quinone oxidoreductase subunit D of Rickettsia conorii (strain ATCC VR-613 / Malish 7).